The sequence spans 98 residues: Integration host factor subunit beta (98 aa).

The interval 59-98 is disordered; sequence RTGRNPKTGESVTLPGKYVPHFKPGKEMRDRVNESIQSEG. A compositionally biased stretch (basic and acidic residues) spans 82 to 91; the sequence is PGKEMRDRVN.

Belongs to the bacterial histone-like protein family. Heterodimer of an alpha and a beta chain.

This protein is one of the two subunits of integration host factor, a specific DNA-binding protein that functions in genetic recombination as well as in transcriptional and translational control. This is Integration host factor subunit beta from Saccharophagus degradans (strain 2-40 / ATCC 43961 / DSM 17024).